The following is a 119-amino-acid chain: Ribonuclease P protein component (119 aa).

This sequence belongs to the RnpA family. Consists of a catalytic RNA component (M1 or rnpB) and a protein subunit.

The catalysed reaction is Endonucleolytic cleavage of RNA, removing 5'-extranucleotides from tRNA precursor.. In terms of biological role, RNaseP catalyzes the removal of the 5'-leader sequence from pre-tRNA to produce the mature 5'-terminus. It can also cleave other RNA substrates such as 4.5S RNA. The protein component plays an auxiliary but essential role in vivo by binding to the 5'-leader sequence and broadening the substrate specificity of the ribozyme. This is Ribonuclease P protein component from Klebsiella pneumoniae (strain 342).